We begin with the raw amino-acid sequence, 340 residues long: Pseudaminic acid synthase (340 aa).

Positions 281–337 (SLFVIKDIQKGEALTENNIKALRPNLGLHPKFYKEILGQKASKFLKANTPLSADDIE) constitute an AFP-like domain.

It belongs to the pseudaminic acid synthase family. The cofactor is a divalent metal cation.

It carries out the reaction 2,4-diacetamido-2,4,6-trideoxy-beta-L-altrose + phosphoenolpyruvate + H2O = pseudaminate + phosphate. Catalyzes the fifth step in the biosynthesis of pseudaminic acid, a sialic-acid-like sugar that is used to modify flagellin. Catalyzes the condensation of phosphoenolpyruvate with 2,4-diacetamido-2,4,6-trideoxy-beta-l-altropyranose, forming pseudaminic acid. This Helicobacter pylori (strain ATCC 700392 / 26695) (Campylobacter pylori) protein is Pseudaminic acid synthase (pseI).